The primary structure comprises 458 residues: Phosphoglucosamine mutase (458 aa).

The active-site Phosphoserine intermediate is the S106. Mg(2+) is bound by residues S106, D247, D249, and D251. At S106 the chain carries Phosphoserine.

Belongs to the phosphohexose mutase family. The cofactor is Mg(2+). Activated by phosphorylation.

The catalysed reaction is alpha-D-glucosamine 1-phosphate = D-glucosamine 6-phosphate. In terms of biological role, catalyzes the conversion of glucosamine-6-phosphate to glucosamine-1-phosphate. The sequence is that of Phosphoglucosamine mutase from Chlamydia abortus (strain DSM 27085 / S26/3) (Chlamydophila abortus).